The sequence spans 114 residues: Apokedarcidin (114 aa).

2 disulfides stabilise this stretch: C37–C47 and C88–C95.

This sequence belongs to the neocarzinostatin family.

In terms of biological role, binds non-covalently to an enediyne chromophore which is the cytotoxic and mutagenic component of the antibiotic. The chromophore cleaves duplex DNA site-specifically in a single-stranded manner. The apoprotein cleaves proteins selectively, in particular highly basic histones, with H1 proteins being cleaved the more readily. The chain is Apokedarcidin from Actinomycete sp. (strain L585-6 / ATCC 53650).